Consider the following 331-residue polypeptide: Hydroxysteroid dehydrogenase-like protein 1 (331 aa).

The required for mitochondria translocation stretch occupies residues Ala2 to Ala82. NADP(+)-binding positions include Gly74–Gly80 and Asp125. Ser205 provides a ligand contact to substrate. Residue Tyr218 is the Proton acceptor of the active site. NADP(+) is bound at residue Lys222.

It belongs to the short-chain dehydrogenases/reductases (SDR) family. 17-beta-HSD 3 subfamily.

The protein localises to the mitochondrion. In terms of biological role, may catalyze the metabolism of steroid hormones and thus play an important role in sex differentiation, the emergence and maintenance of the secondary sexual characters, and the regulation of endocrine. This Gallus gallus (Chicken) protein is Hydroxysteroid dehydrogenase-like protein 1 (HSDL1).